Consider the following 555-residue polypeptide: Potassium-transporting ATPase potassium-binding subunit (555 aa).

10 helical membrane-spanning segments follow: residues 2–22 (IWVA…PTGI), 60–80 (QYAL…YFIF), 130–150 (IGIT…VMAF), 173–193 (VFLP…VPQT), 246–266 (MSNI…PFTY), 278–298 (ILFV…TTSE), 374–394 (AGFV…GLMV), 412–432 (LIAV…ALAL), 483–503 (LVMF…AASL), and 525–545 (GIFI…MLVL).

It belongs to the KdpA family. As to quaternary structure, the system is composed of three essential subunits: KdpA, KdpB and KdpC.

Its subcellular location is the cell membrane. Its function is as follows. Part of the high-affinity ATP-driven potassium transport (or Kdp) system, which catalyzes the hydrolysis of ATP coupled with the electrogenic transport of potassium into the cytoplasm. This subunit binds the extracellular potassium ions and delivers the ions to the membrane domain of KdpB through an intramembrane tunnel. The sequence is that of Potassium-transporting ATPase potassium-binding subunit from Bacillus thuringiensis (strain Al Hakam).